Consider the following 1447-residue polypeptide: Adhesion G protein-coupled receptor L3 (1447 aa).

An N-terminal signal peptide occupies residues 1-19 (MWPSQLLIFMMLLAPIIHA). The Extracellular segment spans residues 20-862 (FSRAPIPMAV…VKHSDAVHDL (843 aa)). One can recognise an SUEL-type lectin domain in the interval 35–124 (SCESYPIELR…KYLEVQYECV (90 aa)). Cystine bridges form between C36–C66, C45–C123, C78–C110, C91–C97, and C135–C317. N93 is a glycosylation site (N-linked (GlcNAc...) asparagine). The Olfactomedin-like domain occupies 134–393 (LCPGLLKGVY…VVKYSLDFGP (260 aa)). The interval 249-279 (YHDTSPYRWGGKSDIDLAVDENGLWVIYATE) is interaction with FLRT3. Residues D264, N312, A313, and V367 each contribute to the Ca(2+) site. The interval 426–473 (DISTTGPLGMGSTTTSTTLRTTTLSPGRSTTPSVSGRRNRSTSTPSPA) is disordered. A compositionally biased stretch (low complexity) spans 428-458 (STTGPLGMGSTTTSTTLRTTTLSPGRSTTPS). N464, N549, N746, N759, N804, and N830 each carry an N-linked (GlcNAc...) asparagine glycan. Residues 675–854 (DIVRENTDNI…AVLMAHVEVK (180 aa)) form the GAIN-B domain. 2 cysteine pairs are disulfide-bonded: C805-C836 and C824-C838. The tract at residues 805 to 854 (CSFWSYSKRTMTGYWSTQGCRLLTTNKTHTTCSCNHLTNFAVLMAHVEVK) is GPS. Positions 842–855 (TNFAVLMAHVEVKH) are stachel. The chain crosses the membrane as a helical span at residues 863-888 (LLDVITWVGILLSLVCLLICIFTFCF). The Cytoplasmic segment spans residues 889–896 (FRGLQSDR). The helical transmembrane segment at 897 to 918 (NTIHKNLCISLFVAELLFLIGI) threads the bilayer. Topologically, residues 919 to 926 (NRTDQPIA) are extracellular. A helical transmembrane segment spans residues 927-950 (CAVFAALLHFFFLAAFTWMFLEGV). A disulfide bridge links C927 with C999. Residues 951-967 (QLYIMLVEVFESEHSRR) are Cytoplasmic-facing. Residues 968–990 (KYFYLVGYGMPALIVAVSAAVDY) form a helical membrane-spanning segment. Residues 991 to 1005 (RSYGTDKVCWLRLDT) are Extracellular-facing. A helical membrane pass occupies residues 1006–1027 (YFIWSFIGPATLIIMLNVIFLG). Residues 1028-1053 (IALYKMFHHTAILKPESGCLDNIKSW) are Cytoplasmic-facing. The helical transmembrane segment at 1054 to 1073 (VIGAIALLCLLGLTWAFGLM) threads the bilayer. Residues 1074 to 1078 (YINES) lie on the Extracellular side of the membrane. A glycan (N-linked (GlcNAc...) asparagine) is linked at N1076. Residues 1079-1104 (TVIMAYLFTIFNSLQGMFIFIFHCVL) traverse the membrane as a helical segment. At 1105–1447 (QKKVRKEYGK…KGPAHLVTSL (343 aa)) the chain is on the cytoplasmic side. Positions 1123–1147 (GKSTESSIGSGKTSGSRTPGRYSTG) are disordered. S1164 carries the post-translational modification Phosphoserine. Positions 1423 to 1447 (IVPPNKDGTPPEGSSKGPAHLVTSL) are disordered. Residues 1442-1447 (HLVTSL) carry the PDZ-binding motif.

It belongs to the G-protein coupled receptor 2 family. LN-TM7 subfamily. Heterodimer of 2 chains generated by proteolytic processing; the large extracellular N-terminal fragment and the membrane-bound C-terminal fragment predominantly remain associated and non-covalently linked. Interacts (via olfactomedin-like domain) with FLRT1 (via extracellular domain). Interacts (via olfactomedin-like domain) with FLRT2 (via extracellular domain). Interacts (via olfactomedin-like domain) with FLRT3 (via extracellular domain); the interaction is direct. Interacts (via extracellular domain) with TENM1. Interacts (via extracellular domain) with TENM2. Interacts (via extracellular domain) with TENM3. Identified in a complex with FLRT3 and UNC5B; does not interact with UNC5B by itself. Identified in a complex with FLRT3 and UNC5D; does not interact with UNC5D by itself. In terms of assembly, interacts (via PDZ-binding motif) with SHANK3. Interacts (via PDZ-binding motif) with DLG4. Autoproteolytically processed at the GPS region of the GAIN-B domain; this cleavage modulates receptor activity.

It localises to the cell membrane. The protein resides in the postsynaptic cell membrane. It is found in the cell projection. Its subcellular location is the axon. The protein localises to the cell junction. With respect to regulation, forms a heterodimer of 2 chains generated by proteolytic processing that remain associated through non-covalent interactions mediated by the GAIN-B domain. In the inactivated receptor, the Stachel sequence (also named stalk) is embedded in the GAIN-B domain, where it adopts a beta-strand conformation. On activation, the Stachel moves into the 7 transmembrane region and adopts a twisted hook-shaped configuration that forms contacts within the receptor, leading to coupling of a G-alpha protein, which activates signaling. The cleaved GAIN-B and N-terminal domains can then dissociate from the rest of the receptor. In terms of biological role, orphan adhesion G-protein coupled receptor (aGPCR), which mediates synapse specificity. Ligand binding causes a conformation change that triggers signaling via guanine nucleotide-binding proteins (G proteins) and modulates the activity of downstream effectors. ADGRL3 is coupled with different classes of G alpha proteins, such as G(12)/G(13), G(s), G(i) or G(q), depending on the context. Coupling to G(12)/G(13) G proteins, which mediates the activation Rho small GTPases is the most efficient. Following G-protein coupled receptor activation, associates with cell adhesion molecules that are expressed at the surface of adjacent cells to direct synapse specificity. Specifically mediates the establishment of Schaffer-collateral synapses formed by CA3-region axons on CA1-region pyramidal neurons in the hippocampus. Localizes to postsynaptic spines in excitatory synapses in the S.oriens and S.radiatum and interacts with presynaptic cell adhesion molecules FLRT3 and TENM2, promoting synapse formation. Plays a role in the development of glutamatergic synapses in the cortex. Important in determining the connectivity rates between the principal neurons in the cortex. Its function is as follows. Orphan adhesion G-protein coupled receptor (aGPCR), which mediates synapse specificity. Ligand binding causes a conformation change that triggers signaling via guanine nucleotide-binding proteins (G proteins) and modulates the activity of downstream effectors, such as adenylate cyclase. Isoform 1 is specifically coupled to G(s) G proteins and mediates activation of adenylate cyclase activity. Following G-protein coupled receptor activation, undergoes liquid-liquid phase transition, associates with (1) cell adhesion molecules that are expressed at the surface of adjacent cells, as well as (2) PDZ-containing proteins, such as SHANK3 and DLG4, in the cytoplasm to direct synapse formation. This Homo sapiens (Human) protein is Adhesion G protein-coupled receptor L3.